A 930-amino-acid polypeptide reads, in one-letter code: Isoleucine--tRNA ligase (930 aa).

Residues 57–67 (PYANGNIHVGH) carry the 'HIGH' region motif. E554 serves as a coordination point for L-isoleucyl-5'-AMP. Positions 595 to 599 (KMSKS) match the 'KMSKS' region motif. K598 provides a ligand contact to ATP.

It belongs to the class-I aminoacyl-tRNA synthetase family. IleS type 1 subfamily. In terms of assembly, monomer.

Its subcellular location is the cytoplasm. The enzyme catalyses tRNA(Ile) + L-isoleucine + ATP = L-isoleucyl-tRNA(Ile) + AMP + diphosphate. In terms of biological role, catalyzes the attachment of isoleucine to tRNA(Ile). As IleRS can inadvertently accommodate and process structurally similar amino acids such as valine, to avoid such errors it has two additional distinct tRNA(Ile)-dependent editing activities. One activity is designated as 'pretransfer' editing and involves the hydrolysis of activated Val-AMP. The other activity is designated 'posttransfer' editing and involves deacylation of mischarged Val-tRNA(Ile). This is Isoleucine--tRNA ligase from Streptococcus agalactiae serotype Ia (strain ATCC 27591 / A909 / CDC SS700).